Here is a 615-residue protein sequence, read N- to C-terminus: DNA mismatch repair protein MutL (615 aa).

The interval 362–397 (HFAEPAVREPVAPRYSPAPASGSRPAASWPNAQPGY) is disordered. Low complexity predominate over residues 373 to 391 (APRYSPAPASGSRPAASWP).

This sequence belongs to the DNA mismatch repair MutL/HexB family.

Functionally, this protein is involved in the repair of mismatches in DNA. It is required for dam-dependent methyl-directed DNA mismatch repair. May act as a 'molecular matchmaker', a protein that promotes the formation of a stable complex between two or more DNA-binding proteins in an ATP-dependent manner without itself being part of a final effector complex. This chain is DNA mismatch repair protein MutL, found in Escherichia coli O6:H1 (strain CFT073 / ATCC 700928 / UPEC).